A 90-amino-acid polypeptide reads, in one-letter code: MATADHEATGLDCDHAIRRLLRRIDAHIADEPRDSPVRRYLERELGGREGTEADTRLVVHAQINVVRELFERRSDADGLRLLSNIERECC.

Belongs to the CowN family.

Functionally, is required to sustain N(2)-dependent growth in the presence of low levels of carbon monoxide (CO). Probably acts by protecting the N(2) fixation ability of the nitrogenase complex, which is inactivated in the presence of CO. In Halorhodospira halophila (strain DSM 244 / SL1) (Ectothiorhodospira halophila (strain DSM 244 / SL1)), this protein is N(2)-fixation sustaining protein CowN.